The chain runs to 162 residues: 2-C-methyl-D-erythritol 2,4-cyclodiphosphate synthase (162 aa).

Residues aspartate 9 and histidine 11 each contribute to the a divalent metal cation site. 4-CDP-2-C-methyl-D-erythritol 2-phosphate-binding positions include 9 to 11 (DVH) and 35 to 36 (HS). Histidine 43 contributes to the a divalent metal cation binding site. 4-CDP-2-C-methyl-D-erythritol 2-phosphate-binding positions include 57–59 (DIG), 62–66 (FPDTD), 133–136 (TTTE), phenylalanine 140, and arginine 143.

Belongs to the IspF family. As to quaternary structure, homotrimer. A divalent metal cation serves as cofactor.

The catalysed reaction is 4-CDP-2-C-methyl-D-erythritol 2-phosphate = 2-C-methyl-D-erythritol 2,4-cyclic diphosphate + CMP. It participates in isoprenoid biosynthesis; isopentenyl diphosphate biosynthesis via DXP pathway; isopentenyl diphosphate from 1-deoxy-D-xylulose 5-phosphate: step 4/6. Functionally, involved in the biosynthesis of isopentenyl diphosphate (IPP) and dimethylallyl diphosphate (DMAPP), two major building blocks of isoprenoid compounds. Catalyzes the conversion of 4-diphosphocytidyl-2-C-methyl-D-erythritol 2-phosphate (CDP-ME2P) to 2-C-methyl-D-erythritol 2,4-cyclodiphosphate (ME-CPP) with a corresponding release of cytidine 5-monophosphate (CMP). This chain is 2-C-methyl-D-erythritol 2,4-cyclodiphosphate synthase, found in Histophilus somni (strain 129Pt) (Haemophilus somnus).